The chain runs to 347 residues: NADH-ubiquinone oxidoreductase chain 2 (347 aa).

10 consecutive transmembrane segments (helical) span residues 13–33 (IFTGTLITALSSHWFFTWVGL), 60–80 (FLTQATASMILLMAILSNSML), 96–116 (LMIMMAMAMKLGMAPFHFWVP), 123–143 (PLMSGLLLLTWQKLAPISIMY), 149–169 (LNVNLLLTLSILSIMAGSWGG), 178–198 (ILAYSSITHMGWMMAVLPYNP), 201–221 (TILNLTIYIILTTTAFLLLNL), 247–267 (TLLSLGGLPPLTGFLPKWVII), 274–294 (NSLIIPTIMAIITLLNLYFYL), and 326–346 (LPTLITLTTLLLPISPFMLMI).

Belongs to the complex I subunit 2 family. As to quaternary structure, core subunit of respiratory chain NADH dehydrogenase (Complex I) which is composed of 45 different subunits. Interacts with TMEM242.

Its subcellular location is the mitochondrion inner membrane. The catalysed reaction is a ubiquinone + NADH + 5 H(+)(in) = a ubiquinol + NAD(+) + 4 H(+)(out). In terms of biological role, core subunit of the mitochondrial membrane respiratory chain NADH dehydrogenase (Complex I) which catalyzes electron transfer from NADH through the respiratory chain, using ubiquinone as an electron acceptor. Essential for the catalytic activity and assembly of complex I. The polypeptide is NADH-ubiquinone oxidoreductase chain 2 (Pan troglodytes (Chimpanzee)).